The following is a 257-amino-acid chain: UPF0246 protein Spro_0686 (257 aa).

The protein belongs to the UPF0246 family.

The sequence is that of UPF0246 protein Spro_0686 from Serratia proteamaculans (strain 568).